Consider the following 418-residue polypeptide: MPGYYLWTIGCQMNQAESERLGRLFELWGYSLADKAEDAELVLVNSCVVREHAENKVINRLHILRKLKDKNPRLKIALTGCLVGQDIASVRKKFPFVDYIFQPGALPDWGEIPEGFILPLKPPVSASITIMQGCDNFCTYCIVPYRRGREKSRSISELCCEAAELVRRGSREVVLLGQNVDSYGHDLPEKPCLADLLYALSDIPGLLRIRFLTSHPKDISQKLIDAMASLHKVCHSLSLPVQAGADTILAAMRRGYTSEQYRELVGRLKTAMPDISLQTDLIVGFPSETAEQFDQSYKLMSDIGYDAIHVAAYSPRPQTAAARDMADDVPVAEKKRRLKLIEDLQKETVSKANSALVDTFAEVLVEGRQKNKWQGRTLGGKLVFLESDLPLEGCLINVKIFKASPWSLQAKLVKILES.

In terms of domain architecture, MTTase N-terminal spans 2–118; sequence PGYYLWTIGC…WGEIPEGFIL (117 aa). 6 residues coordinate [4Fe-4S] cluster: cysteine 11, cysteine 47, cysteine 81, cysteine 134, cysteine 138, and cysteine 141. In terms of domain architecture, Radical SAM core spans 120–352; the sequence is LKPPVSASIT…DLQKETVSKA (233 aa). The 61-residue stretch at 354–414 folds into the TRAM domain; that stretch reads SALVDTFAEV…PWSLQAKLVK (61 aa).

Belongs to the methylthiotransferase family. MiaB subfamily. As to quaternary structure, monomer. The cofactor is [4Fe-4S] cluster.

It localises to the cytoplasm. The catalysed reaction is N(6)-dimethylallyladenosine(37) in tRNA + (sulfur carrier)-SH + AH2 + 2 S-adenosyl-L-methionine = 2-methylsulfanyl-N(6)-dimethylallyladenosine(37) in tRNA + (sulfur carrier)-H + 5'-deoxyadenosine + L-methionine + A + S-adenosyl-L-homocysteine + 2 H(+). Its function is as follows. Catalyzes the methylthiolation of N6-(dimethylallyl)adenosine (i(6)A), leading to the formation of 2-methylthio-N6-(dimethylallyl)adenosine (ms(2)i(6)A) at position 37 in tRNAs that read codons beginning with uridine. This is tRNA-2-methylthio-N(6)-dimethylallyladenosine synthase from Dehalococcoides mccartyi (strain ATCC BAA-2266 / KCTC 15142 / 195) (Dehalococcoides ethenogenes (strain 195)).